The sequence spans 209 residues: NAD(P)H-quinone oxidoreductase subunit I (209 aa).

2 4Fe-4S ferredoxin-type domains span residues 55–84 (GRIH…VDYE) and 95–124 (NSYS…MTEE). [4Fe-4S] cluster contacts are provided by Cys64, Cys67, Cys70, Cys74, Cys104, Cys107, Cys110, and Cys114.

The protein belongs to the complex I 23 kDa subunit family. In terms of assembly, NDH-1 is composed of at least 11 different subunits. Requires [4Fe-4S] cluster as cofactor.

It localises to the cell inner membrane. The catalysed reaction is a plastoquinone + NADH + (n+1) H(+)(in) = a plastoquinol + NAD(+) + n H(+)(out). The enzyme catalyses a plastoquinone + NADPH + (n+1) H(+)(in) = a plastoquinol + NADP(+) + n H(+)(out). In terms of biological role, NDH-1 shuttles electrons from an unknown electron donor, via FMN and iron-sulfur (Fe-S) centers, to quinones in the respiratory and/or the photosynthetic chain. The immediate electron acceptor for the enzyme in this species is believed to be plastoquinone. Couples the redox reaction to proton translocation, and thus conserves the redox energy in a proton gradient. The sequence is that of NAD(P)H-quinone oxidoreductase subunit I from Gloeobacter violaceus (strain ATCC 29082 / PCC 7421).